The following is a 549-amino-acid chain: Rhodopsin kinase grk7a (549 aa).

A Phosphoserine modification is found at serine 33. Positions 53–171 (FESLCEKQPI…QASPFFDKFL (119 aa)) constitute an RGS domain. Positions 186 to 449 (FYEFRTLGKG…NDDPRKHEWF (264 aa)) constitute a Protein kinase domain. ATP-binding positions include 192-200 (LGKGGFGEV) and lysine 215. The active-site Proton acceptor is the aspartate 311. The 66-residue stretch at 450 to 515 (KSINFARLEA…GAVSIAWQQE (66 aa)) folds into the AGC-kinase C-terminal domain. A disordered region spans residues 522–549 (FDELSDPNRKESSGGSDDDKKSGTCTLL). Positions 527–543 (DPNRKESSGGSDDDKKS) are enriched in basic and acidic residues. A Cysteine methyl ester modification is found at cysteine 546. A lipid anchor (S-geranylgeranyl cysteine) is attached at cysteine 546. Positions 547 to 549 (TLL) are cleaved as a propeptide — removed in mature form.

This sequence belongs to the protein kinase superfamily. AGC Ser/Thr protein kinase family. GPRK subfamily. Post-translationally, phosphorylation at Ser-33 is regulated by light and activated by cAMP.

Its subcellular location is the membrane. The catalysed reaction is L-threonyl-[rhodopsin] + ATP = O-phospho-L-threonyl-[rhodopsin] + ADP + H(+). It carries out the reaction L-seryl-[rhodopsin] + ATP = O-phospho-L-seryl-[rhodopsin] + ADP + H(+). Functionally, retina-specific kinase involved in the shutoff of the photoresponse and adaptation to changing light conditions via cone opsin phosphorylation, including rhodopsin (RHO). The chain is Rhodopsin kinase grk7a (grk7a) from Danio rerio (Zebrafish).